A 798-amino-acid chain; its full sequence is Integrin beta-1 (798 aa).

Positions 1–20 (MNLQLIFWIGLISSVCCVFG) are cleaved as a signal peptide. Over 21–728 (QADENRCLKA…ETPECPTGPD (708 aa)) the chain is Extracellular. The region spanning 26–76 (RCLKANAKSCGECIQAGPNCGWCTNSTFLQEGMPTSARCDDLEALKKKGCH) is the PSI domain. Intrachain disulfides connect Cys27/Cys45, Cys35/Cys464, Cys38/Cys64, Cys48/Cys75, Cys207/Cys213, Cys261/Cys301, Cys401/Cys415, Cys435/Cys462, Cys466/Cys486, Cys477/Cys489, Cys491/Cys500, Cys502/Cys533, Cys516/Cys531, Cys525/Cys536, Cys538/Cys553, Cys555/Cys576, Cys560/Cys574, Cys568/Cys579, Cys581/Cys590, Cys592/Cys615, Cys599/Cys613, Cys607/Cys618, Cys620/Cys630, Cys633/Cys636, Cys640/Cys691, Cys646/Cys665, Cys649/Cys661, and Cys699/Cys723. Residue Asn50 is glycosylated (N-linked (GlcNAc...) asparagine). Residues 75–91 (CHPNDIENPRGSKDIKK) show a composition bias toward basic and acidic residues. Residues 75–105 (CHPNDIENPRGSKDIKKNKNVTNRSKGTAEK) form a disordered region. Residues Asn94 and Asn97 are each glycosylated (N-linked (GlcNAc...) asparagine). Positions 140 to 378 (DYPIDLYYLM…QLIIDAYNSL (239 aa)) constitute a VWFA domain. 2 residues coordinate Mg(2+): Ser152 and Ser154. Ca(2+)-binding residues include Ser154, Asp157, Asp158, and Glu189. Positions 207–213 (CTNEQNC) are CX3CL1-binding. The N-linked (GlcNAc...) asparagine glycan is linked to Asn212. Positions 244, 246, 248, and 249 each coordinate Ca(2+). Glu249 is a Mg(2+) binding site. Asn269 is a glycosylation site (N-linked (GlcNAc...) asparagine). The CX3CL1-binding stretch occupies residues 295-314 (LPNDGQCHLENDVYTMSHYY). Ala362 is a Ca(2+) binding site. Residues Asn363, Asn406, and Asn417 are each glycosylated (N-linked (GlcNAc...) asparagine). The interval 383-465 (ILENSKLPEG…IILQFICECE (83 aa)) is interaction with TMEM182. I-EGF domains lie at 466–501 (CQGE…RHCE), 502–554 (CSTD…KFCE), 555–591 (CDNF…SACD), and 592–631 (CSLD…PTCE). An N-linked (GlcNAc...) asparagine glycan is attached at Asn481. Asn520 carries N-linked (GlcNAc...) asparagine glycosylation. N-linked (GlcNAc...) asparagine glycosylation is present at Asn584. N-linked (GlcNAc...) asparagine glycosylation is present at Asn669. A helical transmembrane segment spans residues 729–749 (IIPIVAGVVAGIVLIGLALLL). Residues 750-798 (IWKLLMIIHDRREFAKFEKEKMNAKWDTGENPIYKSAVTTVVNPKYEGK) are Cytoplasmic-facing. Residues 762-767 (EFAKFE) are signal for sorting from recycling endosomes; interaction with ACAP1. Phosphothreonine is present on Thr777. Residue Tyr783 is modified to Phosphotyrosine. The residue at position 785 (Ser785) is a Phosphoserine. Positions 785–792 (SAVTTVVN) are interaction with ITGB1BP1. At Thr789 the chain carries Phosphothreonine. The residue at position 794 (Lys794) is an N6-acetyllysine; alternate. Lys794 is covalently cross-linked (Glycyl lysine isopeptide (Lys-Gly) (interchain with G-Cter in SUMO1); alternate).

This sequence belongs to the integrin beta chain family. As to quaternary structure, interacts with seprase FAP (seprase); the interaction occurs at the cell surface of invadopodia membrane in a collagen-dependent manner. Heterodimer of an alpha and a beta subunit. Beta-1 associates with either alpha-1, alpha-2, alpha-3, alpha-4, alpha-5, alpha-6, alpha-7, alpha-8, alpha-9, alpha-10, alpha-11 or alpha-V. ITGA6:ITGB1 is found in a complex with CD9; interaction takes place in oocytes and is involved in sperm-egg fusion. Binds LGALS3BP and NMRK2, when associated with alpha-7, but not with alpha-5. Interacts with FLNB, FLNC and RANBP9. Interacts with KRT1 in the presence of RACK1 and SRC. Interacts with JAML; integrin alpha-4/beta-1 may regulate leukocyte to endothelial cells adhesion by controlling JAML homodimerization. Interacts with RAB21. Interacts (via the cytoplasmic region) with RAB25 (via the hypervariable C-terminal region). Interacts with MYO10. Interacts with ITGB1BP1 (via C-terminal region); the interaction is a prerequisite for focal adhesion disassembly. Interacts with TLN1; the interaction is prevented by competitive binding of ITGB1BP1. Interacts with ACAP1; required for ITGB1 recycling. Interacts with ASAP3. Interacts with FERMT2; the interaction is inhibited in presence of ITGB1BP1. Interacts with DAB2. Interacts with FGR and HCK. Interacts with EMP2; the interaction may be direct or indirect and ITGB1 has a heterodimer form. ITGA5:ITGB1 interacts with CCN3. ITGA4:ITGB1 is found in a ternary complex with CX3CR1 and CX3CL1. ITGA5:ITGB1 interacts with FBN1. ITGA5:ITGB1 interacts with IL1B. Interacts with MDK. ITGA4:ITGB1 interacts with MDK; this interaction mediates MDK-induced osteoblast cells migration through PXN phosphorylation. ITGA6:ITGB1 interacts with MDK; this interaction mediates MDK-induced neurite-outgrowth. ITGA5:ITGB1 interacts with ACE2. Interacts with TMEM182 and LAMB1. Interacts with tensin TNS3; TNS3 also interacts with PEAK1, thus acting as an adapter molecule to bridge the association of PEAK1 with ITGB1. Interacts with tensin TNS4; the interaction displaces tensin TNS3 from the ITGB1 cytoplasmic tail and promotes ITGB1 stability. Integrin ITGA9:ITGB1 interacts with SPP1/OPN (via N-terminus). Integrin ITGA9:ITGB1 interacts with TNC/TNFN3 (via the 3rd Fibronectin type-III domain). Integrins ITGA4:ITGB1 and ITGA9:ITGB1 interact with SVEP1 (via Sushi domain 21); thereby inhibit Ca(2+) intracellular signaling and as a result repress vasocontraction. ITGA4:ITGB1 and ITGA5:ITGB1 interacts with SELP. Interacts with CD248. ITGA5:ITGB1 interacts with IGFBP1. ITGA4:ITGB1 interacts with BCAM. Interacts with ADGRG6. Interacts with the C-terminal region of FLNC. Interacts with filamin FLNA isoform 3/VAR-1. In terms of assembly, interacts with ACE2. Interacts with alpha-7B in cardiomyocytes of adult heart and alpha-7A and alpha-7B in adult skeletal muscle. Interacts with filamin FLNA isoform 3/VAR-1.

Its subcellular location is the cell membrane. The protein resides in the cell projection. The protein localises to the invadopodium membrane. It is found in the ruffle membrane. It localises to the recycling endosome. Its subcellular location is the melanosome. The protein resides in the lamellipodium. The protein localises to the ruffle. It is found in the cell junction. It localises to the focal adhesion. Its subcellular location is the sarcolemma. Integrins alpha-1/beta-1, alpha-2/beta-1, alpha-10/beta-1 and alpha-11/beta-1 are receptors for collagen. Integrins alpha-1/beta-1 and alpha-2/beta-2 recognize the proline-hydroxylated sequence G-F-P-G-E-R in collagen. Integrins alpha-2/beta-1, alpha-3/beta-1, alpha-4/beta-1, alpha-5/beta-1, alpha-8/beta-1, alpha-10/beta-1, alpha-11/beta-1 and alpha-V/beta-1 are receptors for fibronectin. Alpha-4/beta-1 recognizes one or more domains within the alternatively spliced CS-1 and CS-5 regions of fibronectin. Integrin alpha-5/beta-1 is a receptor for fibrinogen. Integrin alpha-1/beta-1, alpha-2/beta-1, alpha-6/beta-1 and alpha-7/beta-1 are receptors for lamimin. Integrin alpha-6/beta-1 (ITGA6:ITGB1) is present in oocytes and is involved in sperm-egg fusion. Integrin alpha-4/beta-1 is a receptor for VCAM1 and recognizes the sequence Q-I-D-S in VCAM1. Integrin alpha-9/beta-1 is a receptor for VCAM1, cytotactin and osteopontin. It recognizes the sequence A-E-I-D-G-I-E-L in cytotactin. Integrin alpha-3/beta-1 is a receptor for epiligrin, thrombospondin and CSPG4. Integrin alpha-3/beta-1 provides a docking site for FAP (seprase) at invadopodia plasma membranes in a collagen-dependent manner and hence may participate in the adhesion, formation of invadopodia and matrix degradation processes, promoting cell invasion. Alpha-3/beta-1 may mediate with LGALS3 the stimulation by CSPG4 of endothelial cells migration. Integrin alpha-V/beta-1 is a receptor for vitronectin. Beta-1 integrins recognize the sequence R-G-D in a wide array of ligands. When associated with alpha-7/beta-1 integrin, regulates cell adhesion and laminin matrix deposition. Involved in promoting endothelial cell motility and angiogenesis. Involved in osteoblast compaction through the fibronectin fibrillogenesis cell-mediated matrix assembly process and the formation of mineralized bone nodules. May be involved in up-regulation of the activity of kinases such as PKC via binding to KRT1. Together with KRT1 and RACK1, serves as a platform for SRC activation or inactivation. Plays a mechanistic adhesive role during telophase, required for the successful completion of cytokinesis. ITGA4:ITGB1 binds to fractalkine (CX3CL1) and may act as its coreceptor in CX3CR1-dependent fractalkine signaling. ITGA4:ITGB1 and ITGA5:ITGB1 bind to PLA2G2A via a site (site 2) which is distinct from the classical ligand-binding site (site 1) and this induces integrin conformational changes and enhanced ligand binding to site 1. ITGA5:ITGB1 acts as a receptor for fibrillin-1 (FBN1) and mediates R-G-D-dependent cell adhesion to FBN1. ITGA5:ITGB1 acts as a receptor for fibronectin FN1 and mediates R-G-D-dependent cell adhesion to FN1. ITGA5:ITGB1 is a receptor for IL1B and binding is essential for IL1B signaling. ITGA5:ITGB3 is a receptor for soluble CD40LG and is required for CD40/CD40LG signaling. Plays an important role in myoblast differentiation and fusion during skeletal myogenesis. ITGA9:ITGB1 may play a crucial role in SVEP1/polydom-mediated myoblast cell adhesion. Integrins ITGA9:ITGB1 and ITGA4:ITGB1 repress PRKCA-mediated L-type voltage-gated channel Ca(2+) influx and ROCK-mediated calcium sensitivity in vascular smooth muscle cells via their interaction with SVEP1, thereby inhibit vasocontraction. The protein is Integrin beta-1 (ITGB1) of Bos taurus (Bovine).